A 514-amino-acid chain; its full sequence is FAD-dependent monooxygenase AacuC (514 aa).

The segment at 1–29 is disordered; it reads MVSNEYLTHGDKDEFDPAKWSSTPGELPP. The segment covering 8–17 has biased composition (basic and acidic residues); it reads THGDKDEFDP. 2 residues coordinate FAD: Val-79 and Arg-146. The active site involves Arg-227. FAD contacts are provided by Asp-358 and Gly-371.

Belongs to the paxM FAD-dependent monooxygenase family. Requires FAD as cofactor.

The protein operates within secondary metabolite biosynthesis. FAD-dependent monooxygenase; part of the gene cluster that mediates the biosynthesis of the tetrahydroxanthone dimer secalonic acid D. The pathway begins with the synthesis of atrochrysone thioester by the polyketide synthase AacuL. The atrochrysone carboxyl ACP thioesterase AacuM then breaks the thioester bond and releases the atrochrysone carboxylic acid from AacuL. Atrochrysone carboxylic acid is decarboxylated by the decarboxylase AacuI, and oxidized by the anthrone oxygenase AacuG to yield emodin. Emodin is then reduced to emodin hydroquinone by a yet unidentified oxidoreductase. A-ring reduction by the short chain dehydrogenase AacuN, dehydration by the scytalone dehydratase-like protein AacuK and probable spontaneous re-oxidation, results in overall deoxygenation to chrysophanol. Baeyer-Villiger oxidation by the Baeyer-Villiger monooxygenase (BVMO) AacuH then yields monodictyphenone. Monodictyphenone is transformed into compounds with the tetrahydroxanthone skeleton via methylesterification by the methyltransferase AacuQ, followed by the action of the flavin-dependent monooxygenase AacuC, the isomerase AacuP, and the short chain dehydrogenase/reductase AacuF or AacuD. AacuF and AacuD should accept the same compound as a substrate but perform the ketoreduction with a different stereoselectivity, thus yielding blennolides B and A, respectively. In the final step of the biosynthesis, the cytochrome P450 monooxygenase AacuE accepts blennolide B and/or blennolide A to conduct the dimerization reaction to furnish the tetrahydroxanthone dimers, secalonic acids D, B, and F. The chain is FAD-dependent monooxygenase AacuC from Aspergillus aculeatus (strain ATCC 16872 / CBS 172.66 / WB 5094).